We begin with the raw amino-acid sequence, 515 residues long: Envelope glycoprotein (515 aa).

The first 33 residues, 1 to 33, serve as a signal peptide directing secretion; the sequence is MPKKRRSRRRPQPIIRWVSLTLTLLALCRPIQT. Over 34–435 the chain is Extracellular; it reads WRCSLSLGNQ…LGLTAWVRET (402 aa). N-linked (GlcNAc...) asparagine; by host glycosylation is found at Asn-129 and Asn-203. Residues 212 to 215 carry the CXXC motif; sequence CAIC. 3 disulfides stabilise this stretch: Cys-212-Cys-215, Cys-212-Cys-392, and Cys-384-Cys-391. N-linked (GlcNAc...) asparagine; by host glycosylation is found at Asn-230, Asn-251, Asn-256, Asn-271, and Asn-287. Residues 304-324 form a fusion peptide region; it reads VAALTLGLALSVGLTGINVAV. Coiled-coil stretches lie at residues 330–376 and 388–420; these read QRLT…WLYI and NEPC…DWQW. Asn-351 carries an N-linked (GlcNAc...) asparagine; by host glycan. The immunosuppression stretch occupies residues 365–381; the sequence is AQNRRGLDWLYIRLGFQ. The short motif at 384-392 is the CX6CC element; it reads CPTINEPCC. N-linked (GlcNAc...) asparagine; by host glycosylation is present at Asn-398. A helical membrane pass occupies residues 436–456; sequence IHSVLSLFLLALFLLFLAPCL. The S-palmitoyl cysteine; by host moiety is linked to residue Cys-455. Over 457–515 the chain is Cytoplasmic; it reads IKCLTSRLLKLLRQAPHFPEISLTPKPDSDYQALLPSAPEIYSHLSPVKPDYINLRPCP.

As to quaternary structure, the mature envelope protein (Env) consists of a trimer of SU-TM heterodimers attached by a labile interchain disulfide bond. In terms of processing, specific enzymatic cleavages in vivo yield mature proteins. Envelope glycoproteins are synthesized as an inactive precursor that is N-glycosylated and processed likely by host cell furin or by a furin-like protease in the Golgi to yield the mature SU and TM proteins. The cleavage site between SU and TM requires the minimal sequence [KR]-X-[KR]-R. Post-translationally, the CXXC motif is highly conserved across a broad range of retroviral envelope proteins. It is thought to participate in the formation of a labile disulfide bond possibly with the CX6CC motif present in the transmembrane protein. Isomerization of the intersubunit disulfide bond to an SU intrachain disulfide bond is thought to occur upon receptor recognition in order to allow membrane fusion. The transmembrane protein is palmitoylated.

It localises to the virion membrane. Its subcellular location is the host cell membrane. In terms of biological role, the surface protein (SU) attaches the virus to the host cell by binding to its receptor. This interaction triggers the refolding of the transmembrane protein (TM) and is thought to activate its fusogenic potential by unmasking its fusion peptide. Fusion occurs at the host cell plasma membrane. Its function is as follows. The transmembrane protein (TM) acts as a class I viral fusion protein. Under the current model, the protein has at least 3 conformational states: pre-fusion native state, pre-hairpin intermediate state, and post-fusion hairpin state. During viral and target cell membrane fusion, the coiled coil regions (heptad repeats) assume a trimer-of-hairpins structure, positioning the fusion peptide in close proximity to the C-terminal region of the ectodomain. The formation of this structure appears to drive apposition and subsequent fusion of viral and target cell membranes. Membranes fusion leads to delivery of the nucleocapsid into the cytoplasm. The polypeptide is Envelope glycoprotein (env) (Bovine leukemia virus (isolate American FLK) (BLV)).